Consider the following 86-residue polypeptide: MTRTSKWTVHEAKSNPKYFTHNGNFGESPNHVKRGGYGKGNWGKPGDEINDLIDSGEIKTVFNKTRRGSNSQNNERRLSDLQQYHI.

Phosphoserine occurs at positions 28 and 79. A disordered region spans residues 63–86 (NKTRRGSNSQNNERRLSDLQQYHI).

This sequence belongs to the STF2 family. Associates with ribosomes.

It localises to the cytoplasm. The protein resides in the nucleus. Functionally, may be involved in inhibition of the reverse ATPase reaction of mitochondrial F(1)F(0)-type ATP synthase. In Saccharomyces cerevisiae (strain ATCC 204508 / S288c) (Baker's yeast), this protein is Translation machinery-associated protein 10.